The primary structure comprises 179 residues: Large ribosomal subunit protein uL6 (179 aa).

Belongs to the universal ribosomal protein uL6 family. In terms of assembly, part of the 50S ribosomal subunit.

In terms of biological role, this protein binds to the 23S rRNA, and is important in its secondary structure. It is located near the subunit interface in the base of the L7/L12 stalk, and near the tRNA binding site of the peptidyltransferase center. This is Large ribosomal subunit protein uL6 from Streptomyces griseus subsp. griseus (strain JCM 4626 / CBS 651.72 / NBRC 13350 / KCC S-0626 / ISP 5235).